A 759-amino-acid chain; its full sequence is Olfactomedin-like protein 2B (759 aa).

Positions Met1–Gly20 are cleaved as a signal peptide. Coiled coils occupy residues Thr40–Ala68 and Lys179–Arg209. N-linked (GlcNAc...) asparagine glycans are attached at residues Asn187 and Asn213. Disordered regions lie at residues Thr346 to Ser396 and Thr456 to Asp494. A compositionally biased stretch (low complexity) spans Ala356–Ser396. In terms of domain architecture, Olfactomedin-like spans Arg502–Tyr759. A disulfide bond links Cys503 and Cys689. Residue Asn704 is glycosylated (N-linked (GlcNAc...) asparagine).

As to quaternary structure, homodimer. Binds to heparin and chondroitin sulfate E. In terms of processing, O-glycosylated and N-glycosylated.

It localises to the secreted. In Bos taurus (Bovine), this protein is Olfactomedin-like protein 2B (OLFML2B).